The sequence spans 757 residues: MDVNPTLLFLKVPAQNAISTTFPYTGDPPYSHGTGTGYTMDTVNRTHQYSERGRWTKNTETGAPQLNPIDGPLPKDNEPSGYAQTDCVLEAMAFLEESHPGIFENSCIETMEVVQQTRVDKLTQGRQTYDWTLNRNQPAATALANTIEVFRSNGLMANESGRLIDFLKDVMDSMDREEMEITTHFQRKRRVRDNVTKKMVTQRTIGKKKHRLNKRSYLIRALTLNTMTKDAERGKLKRRAIATPGMQIRGFVYFVETLARSICEKLEQSGLPVGGNEKKAKLANVVRKMMTNSQDTEISFTITGDNTKWNENQNPRMFLAMITYITRNQPEWFRNILSIAPIMFSNKMARLGKGYMFESKSMKLRTQIPAEMLANIDLRYFNDSTRKKIEKIRPLLIDGTASLSPGMMMGMFNMLSTVLGVSILNLGQKRYTKTTYWWDGLQSSDDFALIVNAPNYAGIQAGVDRFYRTCKLLGINMSKKKSYINRTGTFEFTSFFYRYGFVANFSMELPSFGVSGINESADMSIGVTVIKNNMINNDLGPATAQMALQLFIKDYRYTYRCHRGDTQIQTRRSFEIKKLWDQTRSKTGLLVSDGGPNLYNIRNLHIPEVCLKWDLMDEDYQGRLCNPLNPFVSHKEIESVNNAVMMPAHGPAKIMEYDAVATTHSWVPKRNRSILNTSQRGILEDEQMYQRCCNLFEKFFPSSSYRRPVGISSMVEAMISRARIDARIDFESGRIKKEEFTEIMKTCSTIEELRRQK.

A disordered region spans residues 53 to 82 (GRWTKNTETGAPQLNPIDGPLPKDNEPSGY). Short sequence motifs (nuclear localization signal) lie at residues 187 to 195 (RKRRVRDNV) and 203 to 216 (RTIG…NKRS). The tract at residues 249 to 256 (RGFVYFVE) is promoter-binding site. The region spanning 286-483 (VRKMMTNSQD…GINMSKKKSY (198 aa)) is the RdRp catalytic domain.

This sequence belongs to the influenza viruses polymerase PB1 family. Influenza RNA polymerase is composed of three subunits: PB1, PB2 and PA. Interacts (via N-terminus) with PA (via C-terminus). Interacts (via C-terminus) with PB2 (via N-terminus); this interaction is essential for transcription initiation. Interacts (via C-terminus) with human PKP2 (via N-terminus); the interaction competitively inhibits the interaction between the RNA polymerase subunits PB1 and PB2. Phosphorylated by host PRKCA.

It localises to the host nucleus. The protein localises to the host cytoplasm. The catalysed reaction is RNA(n) + a ribonucleoside 5'-triphosphate = RNA(n+1) + diphosphate. Functionally, RNA-dependent RNA polymerase which is responsible for replication and transcription of virus RNA segments. The transcription of viral mRNAs occurs by a unique mechanism called cap-snatching. 5' methylated caps of cellular mRNAs are cleaved after 10-13 nucleotides by PA. In turn, these short capped RNAs are used as primers by PB1 for transcription of viral mRNAs. During virus replication, PB1 initiates RNA synthesis and copy vRNA into complementary RNA (cRNA) which in turn serves as a template for the production of more vRNAs. The polypeptide is RNA-directed RNA polymerase catalytic subunit (Aves (Human)).